The sequence spans 842 residues: Protein P (842 aa).

Residues 1–177 form a terminal protein domain (TP) region; sequence MPLSYQHFRK…FCGSPYSWEQ (177 aa). The spacer stretch occupies residues 178–346; sequence ELQHGRLVFQ…YCLTHIVNLL (169 aa). A disordered region spans residues 218-274; sequence LKQSRLGLQPQQGSLARGKSGRSGSIRARVPPTTRRSFGVEPSGSGHIDNRASSTSS. The tract at residues 347 to 690 is polymerase/reverse transcriptase domain (RT); sequence EDWGPCTEHG…YLHLYPVARR (344 aa). The Reverse transcriptase domain maps to 357-600; sequence EHNIRIPRTP…YSLNFMGYVI (244 aa). Residues Asp429, Asp551, and Asp552 each contribute to the Mg(2+) site.

This sequence belongs to the hepadnaviridae P protein family.

The enzyme catalyses DNA(n) + a 2'-deoxyribonucleoside 5'-triphosphate = DNA(n+1) + diphosphate. It carries out the reaction Endonucleolytic cleavage to 5'-phosphomonoester.. Activated by host HSP70 and HSP40 in vitro to be able to bind the epsilon loop of the pgRNA. Because deletion of the RNase H region renders the protein partly chaperone-independent, the chaperones may be needed indirectly to relieve occlusion of the RNA-binding site by this domain. Inhibited by several reverse-transcriptase inhibitors: Lamivudine, Adefovir and Entecavir. In terms of biological role, multifunctional enzyme that converts the viral RNA genome into dsDNA in viral cytoplasmic capsids. This enzyme displays a DNA polymerase activity that can copy either DNA or RNA templates, and a ribonuclease H (RNase H) activity that cleaves the RNA strand of RNA-DNA heteroduplexes in a partially processive 3'- to 5'-endonucleasic mode. Neo-synthesized pregenomic RNA (pgRNA) are encapsidated together with the P protein, and reverse-transcribed inside the nucleocapsid. Initiation of reverse-transcription occurs first by binding the epsilon loop on the pgRNA genome, and is initiated by protein priming, thereby the 5'-end of (-)DNA is covalently linked to P protein. Partial (+)DNA is synthesized from the (-)DNA template and generates the relaxed circular DNA (RC-DNA) genome. After budding and infection, the RC-DNA migrates in the nucleus, and is converted into a plasmid-like covalently closed circular DNA (cccDNA). The activity of P protein does not seem to be necessary for cccDNA generation, and is presumably released from (+)DNA by host nuclear DNA repair machinery. The chain is Protein P from Hepatitis B virus genotype C subtype adr (isolate Korea/Kim/1989) (HBV-C).